The primary structure comprises 103 residues: Large ribosomal subunit protein bL21 (103 aa).

Belongs to the bacterial ribosomal protein bL21 family. In terms of assembly, part of the 50S ribosomal subunit. Contacts protein L20.

Its function is as follows. This protein binds to 23S rRNA in the presence of protein L20. In Polynucleobacter asymbioticus (strain DSM 18221 / CIP 109841 / QLW-P1DMWA-1) (Polynucleobacter necessarius subsp. asymbioticus), this protein is Large ribosomal subunit protein bL21.